The following is a 344-amino-acid chain: Proline-rich transmembrane protein 2 (344 aa).

Disordered regions lie at residues 1–220 and 233–265; these read MAAS…GAPP and GRAH…GGEG. Residues 1–272 are Cytoplasmic-facing; that stretch reads MAASSSEVSE…GEGTQKPRDY (272 aa). At Ser-28 the chain carries Phosphoserine. Residues 69-82 show a composition bias toward low complexity; it reads PETTETPVETPETV. Phosphothreonine occurs at positions 74 and 78. Residues 124 to 143 are compositionally biased toward polar residues; that stretch reads AEQQSAAPPEPTSEQALQLN. The span at 151-162 shows a compositional bias: pro residues; sequence TSQPPPKPPLQA. The span at 168–178 shows a compositional bias: polar residues; that stretch reads ENPTTEVLTES. Residues 201-211 show a composition bias toward pro residues; sequence APQPHSPPSTK. A Phosphoserine modification is found at Ser-242. Arg-244 is modified (omega-N-methylarginine). Phosphoserine is present on residues Ser-252 and Ser-253. Residues 273–293 constitute an intramembrane region (helical); it reads IILAILSCFCPMWPVNIVAFA. Topologically, residues 294-321 are cytoplasmic; sequence YAVMSRNSLQQGDVDGAQRLGRVAKLLS. Residues 322 to 342 traverse the membrane as a helical segment; the sequence is IVALVGGVLIIIASCVINLGV. The Extracellular segment spans residues 343 to 344; it reads YK.

It belongs to the CD225/Dispanin family. As to quaternary structure, component of the outer core of AMPAR complex. AMPAR complex consists of an inner core made of 4 pore-forming GluA/GRIA proteins (GRIA1, GRIA2, GRIA3 and GRIA4) and 4 major auxiliary subunits arranged in a twofold symmetry. One of the two pairs of distinct binding sites is occupied either by CNIH2, CNIH3 or CACNG2, CACNG3. The other harbors CACNG2, CACNG3, CACNG4, CACNG8 or GSG1L. This inner core of AMPAR complex is complemented by outer core constituents binding directly to the GluA/GRIA proteins at sites distinct from the interaction sites of the inner core constituents. Outer core constituents include at least PRRT1, PRRT2, CKAMP44/SHISA9, FRRS1L and NRN1. The proteins of the inner and outer core serve as a platform for other, more peripherally associated AMPAR constituents. Alone or in combination, these auxiliary subunits control the gating and pharmacology of the AMPAR complex and profoundly impact their biogenesis and protein processing. Interacts with intersectin 1/ITSN1. Interacts with SNARE complex components, including SNAP25, STX1A, SYT1 and SYT2; this interaction may inhibit SNARE complex formation. In terms of tissue distribution, neuron-specific expression throughout the brain, including hippocampus (at protein level).

It localises to the cell membrane. The protein resides in the presynaptic cell membrane. Its subcellular location is the synapse. It is found in the cell projection. The protein localises to the axon. It localises to the cytoplasmic vesicle. The protein resides in the secretory vesicle. Its subcellular location is the synaptic vesicle membrane. It is found in the postsynaptic density membrane. The protein localises to the dendritic spine. In terms of biological role, as a component of the outer core of AMPAR complex, may be involved in synaptic transmission in the central nervous system. In hippocampal neurons, in presynaptic terminals, plays an important role in the final steps of neurotransmitter release, possibly by regulating Ca(2+)-sensing. In the cerebellum, may inhibit SNARE complex formation and down-regulate short-term facilitation. The chain is Proline-rich transmembrane protein 2 (Prrt2) from Rattus norvegicus (Rat).